The following is a 698-amino-acid chain: Endogenous retrovirus group K member 21 Env polyprotein (698 aa).

The segment at 1 to 25 (MHPSEMQRKAPPRRRRHRNRAPLTH) is disordered. Positions 1 to 88 (MHPSEMQRKA…ALMIVSMVVS (88 aa)) are cleaved as a signal peptide. The segment covering 10–20 (APPRRRRHRNR) has biased composition (basic residues). Topologically, residues 89-631 (LPMPAGAAAA…NLNPVTWVKT (543 aa)) are extracellular. N-linked (GlcNAc...) asparagine glycans are attached at residues asparagine 99, asparagine 127, asparagine 152, asparagine 273, asparagine 354, asparagine 371, and asparagine 460. A fusion peptide region spans residues 465–485 (FIFTLIAVIMGLIAVTAMAAV). 4 N-linked (GlcNAc...) asparagine glycosylation sites follow: asparagine 506, asparagine 553, asparagine 565, and asparagine 584. The chain crosses the membrane as a helical span at residues 632-652 (IGSTTIINLILILVCLFCLLL). The Cytoplasmic portion of the chain corresponds to 653 to 698 (VCRCTQQLRRDSDHRERAMMTMVVLSKRKGGNVGKSKRDQIVTVSV).

Belongs to the beta type-B retroviral envelope protein family. HERV class-II K(HML-2) env subfamily. In terms of assembly, the surface (SU) and transmembrane (TM) proteins form a heterodimer. SU and TM are attached by noncovalent interactions or by a labile interchain disulfide bond. In terms of processing, specific enzymatic cleavages in vivo yield the mature SU and TM proteins.

Its subcellular location is the cell membrane. It localises to the virion. Functionally, retroviral envelope proteins mediate receptor recognition and membrane fusion during early infection. Endogenous envelope proteins may have kept, lost or modified their original function during evolution. This endogenous envelope protein has lost its original fusogenic properties. SU mediates receptor recognition. Its function is as follows. TM anchors the envelope heterodimer to the viral membrane through one transmembrane domain. The other hydrophobic domain, called fusion peptide, mediates fusion of the viral membrane with the target cell membrane. This chain is Endogenous retrovirus group K member 21 Env polyprotein (ERVK-21), found in Homo sapiens (Human).